A 196-amino-acid chain; its full sequence is SPRY domain-containing protein 7 (196 aa).

The residue at position 2 (Ala2) is an N-acetylalanine. The B30.2/SPRY domain maps to 2–184; that stretch reads AASVFCCLRC…FSEFYHTPPP (183 aa).

The polypeptide is SPRY domain-containing protein 7 (SPRYD7) (Bos taurus (Bovine)).